A 446-amino-acid chain; its full sequence is Neuropeptide Y receptor type 5 (446 aa).

Topologically, residues 1-42 (MGSEIPDYYNKTLASENNTVATRNSGFPVWEDYKGSVDDLQY) are extracellular. N-linked (GlcNAc...) asparagine glycosylation is found at asparagine 10 and asparagine 17. A helical transmembrane segment spans residues 43 to 63 (FLIGLYTFVSLLGFMGNLLIL). At 64 to 77 (MAVMRKRNQKTTVN) the chain is on the cytoplasmic side. The chain crosses the membrane as a helical span at residues 78 to 98 (FLIGNLAFSDILVVLFCSPFT). The Extracellular segment spans residues 99-117 (LTSVLLDQWMFGKVMCHIM). Cysteine 114 and cysteine 198 are joined by a disulfide. A helical membrane pass occupies residues 118–138 (PFLQCVTVLVSTLILISIAIV). The Cytoplasmic segment spans residues 139 to 156 (RYHMIKHPVSNNLTANHG). Residues 157–177 (YFLIATVWTLGLAICSPLPVF) form a helical membrane-spanning segment. Residues 178–208 (HSLVELQESFGSAWLSSRYLCVESWPSDSYR) lie on the Extracellular side of the membrane. A helical transmembrane segment spans residues 209–229 (IAFTISLLLVQYILPLVCLTV). At 230–369 (SHTSVCRTIS…RKRSRSVFYR (140 aa)) the chain is on the cytoplasmic side. The interval 297 to 325 (RPAPAGPALESREGRPPGKVGSMQSQPPP) is disordered. A helical membrane pass occupies residues 370–390 (LTVLILVFAVSWMPLHLFHVV). Residues 391–407 (TDFNDNLISNRHFKLVY) lie on the Extracellular side of the membrane. The helical transmembrane segment at 408 to 428 (CICHLLGMMSCCLNPILYGFL) threads the bilayer. Residues 429 to 446 (NNGIKADLMSLIHCLHVS) are Cytoplasmic-facing. Cysteine 442 is lipidated: S-palmitoyl cysteine.

The protein belongs to the G-protein coupled receptor 1 family.

Its subcellular location is the cell membrane. In terms of biological role, receptor for neuropeptide Y and peptide YY. The activity of this receptor is mediated by G proteins that inhibit adenylate cyclase activity. Seems to be associated with food intake. Could be involved in feeding disorders. This chain is Neuropeptide Y receptor type 5 (NPY5R), found in Sus scrofa (Pig).